Here is a 454-residue protein sequence, read N- to C-terminus: Tumor necrosis factor receptor superfamily member 1A (454 aa).

An N-terminal signal peptide occupies residues 1-29 (MGLPTVPGLLLSLVLLALLMGIHPSGVTG). The Extracellular segment spans residues 30–212 (LVPSLGDREK…VTNPQDSGTA (183 aa)). 4 TNFR-Cys repeats span residues 43–82 (LCPQ…TVCR), 83–125 (ECEK…DTVC), 126–166 (GCKE…NTVC), and 167–196 (NCHA…KLCL). Intrachain disulfides connect C44/C58, C59/C72, C62/C81, C84/C99, C102/C117, C105/C125, C127/C143, C146/C158, C149/C166, C168/C179, C182/C195, and C185/C191. N-linked (GlcNAc...) asparagine glycosylation is present at N54. An N-linked (GlcNAc...) asparagine glycan is attached at N151. N-linked (GlcNAc...) asparagine glycosylation occurs at N202. A helical membrane pass occupies residues 213 to 235 (VLLPLVILLGLCLLSFIFISLMC). Residues 236 to 454 (RYPRWRPEVY…APSSTTRLPR (219 aa)) are Cytoplasmic-facing. The tract at residues 339-349 (VQKWEDSAHPQ) is N-SMase activation domain (NSD). Positions 356–441 (LAILYAVVDG…GCLENILEAL (86 aa)) constitute a Death domain. A (Microbial infection) N-beta-linked (GlcNAc) arginine glycan is attached at R376.

Binding of TNF to the extracellular domain leads to homotrimerization. The aggregated death domains provide a novel molecular interface that interacts specifically with the death domain of TRADD. Various TRADD-interacting proteins such as TRAFS, RIPK1 and possibly FADD, are recruited to the complex by their association with TRADD. This complex activates at least two distinct signaling cascades, apoptosis and NF-kappa-B signaling. Interacts with BAG4, BABAM2, FEM1B, GRB2, SQSTM1 and TRPC4AP. Interacts with DAB2IP. Interacts directly with NOL3 (via CARD domain); inhibits TNF-signaling pathway. Interacts with SH3RF2, TRADD and RIPK1. SH3RF2 facilitates the recruitment of RIPK1 and TRADD to TNFRSF1A in a TNF-alpha-dependent process. Interacts with PGLYRP1; this interaction is important for cell death induction. Interacts (via death domain) with MADD (via death domain). In terms of processing, (Microbial infection) Glycosylated at Arg-376 by S.typhimurium protein Ssek3: arginine GlcNAcylation prevents homotypic/heterotypic death domain interactions.

It is found in the cell membrane. Its subcellular location is the golgi apparatus membrane. In terms of biological role, receptor for TNFSF2/TNF-alpha and homotrimeric TNFSF1/lymphotoxin-alpha. The adapter molecule FADD recruits caspase-8 to the activated receptor. The resulting death-inducing signaling complex (DISC) performs caspase-8 proteolytic activation which initiates the subsequent cascade of caspases (aspartate-specific cysteine proteases) mediating apoptosis. The protein is Tumor necrosis factor receptor superfamily member 1A (Tnfrsf1a) of Mus musculus (Mouse).